The primary structure comprises 349 residues: Leukotriene B4 receptor 1 (349 aa).

The Extracellular portion of the chain corresponds to 1–19 (MNTTSPAAPSSSGVSFISL). An N-linked (GlcNAc...) asparagine glycan is attached at Asn2. Residues 20 to 42 (LVIIVLSVALAVGLPGNSFVVWS) form a helical membrane-spanning segment. Over 43-54 (ILAKLRKRSVTA) the chain is Cytoplasmic. The chain crosses the membrane as a helical span at residues 55 to 75 (LMVLHLALADLAVLLTAPFFL). The Extracellular segment spans residues 76–91 (YSVAQGTWTFGLSSCR). Residues 92–113 (LFHYVCGVSMYASVLLIMTMSL) traverse the membrane as a helical segment. Residues 114–138 (DRSLAVALPFVSQKLRTKAVAWRVL) are Cytoplasmic-facing. Residues 139–159 (AGIWVMSVLLATPVLLYRTVH) form a helical membrane-spanning segment. The Extracellular portion of the chain corresponds to 160 to 179 (LGLNNRSLTCFLKYPSERHR). N-linked (GlcNAc...) asparagine glycosylation is present at Asn164. A helical transmembrane segment spans residues 180–200 (AFHLFFEVITGFLLPFLVVVA). Residues 201–222 (SYCDIGRRLRARRFRRSRRTGR) lie on the Cytoplasmic side of the membrane. Residues 223-243 (LVALIILAFAAFWLPYHVVNL) form a helical membrane-spanning segment. The Extracellular portion of the chain corresponds to 244–269 (AEGFRAAAGKALGSGPVGRRLLLARH). The chain crosses the membrane as a helical span at residues 270 to 290 (VLITLAFLSSSVNPLLYACAG). Residues 291–349 (GGLLRSAGVGFIAKLLEGTGSETSSSRRKGTLAQTLRGTPASPEPDPAESLTASTNPLE) are Cytoplasmic-facing. The interval 311 to 349 (SETSSSRRKGTLAQTLRGTPASPEPDPAESLTASTNPLE) is disordered.

This sequence belongs to the G-protein coupled receptor 1 family. Phosphorylated by GRK6 upon leukotriene B4 binding; which promotes desensitization.

It localises to the cell membrane. In terms of biological role, receptor for extracellular ATP &gt; UTP and ADP. The activity of this receptor is mediated by G proteins which activate a phosphatidylinositol-calcium second messenger system. May be the cardiac P2Y receptor involved in the regulation of cardiac muscle contraction through modulation of L-type calcium currents. Is a receptor for leukotriene B4, a potent chemoattractant involved in inflammation and immune response. This chain is Leukotriene B4 receptor 1 (LTB4R), found in Bos taurus (Bovine).